The primary structure comprises 434 residues: MSRLSKEEIGKRLLELIKDETKPAIGCTEPVAVAFTVATGKKYMTGEVLKIDLKVSKNILKNGKSVTIPNTEVCGLDIAGALGEICGDSEEGLFVFKNVNKDYLDKAKEMIKNKVVTLNPIENTDPVFVEATLKGEKDEVIAILRGGHTNIEKIIVNGTIAFEKDNKNEKDNKDCDFIKELSLKDIREITEDIGIEKLDFIMDGIEMNKEAAKEGLKREKGLTLGSSLLKLQQEGKLGKDSATIARILTAAGSDLRMGGGMCPIMTSGGSGNQGLCVILPINVVAEDIKASKEKLQRAVFFGHAVNNFVKKYTGKLSAICGCAIAAGIGATAGIAWLLGGKDKEINGAILNMLANLTGMVCDGAKGSCAIKLSTSASEAVISAYLALNDIIVPNNTGIIGNTVEDTINNLGMLCKDGFYKADDVMLSIACKEVI.

Belongs to the UPF0597 family.

The polypeptide is UPF0597 protein CLK_1462 (Clostridium botulinum (strain Loch Maree / Type A3)).